A 457-amino-acid chain; its full sequence is Aromatic amino acid transport protein AroP (457 aa).

Topologically, residues 1–20 (MMDSQQHGEQLKRGLKNRHI) are cytoplasmic. A helical membrane pass occupies residues 21–41 (QLIALGGAIGTGLFLGSASVI). Gln42 is a topological domain (periplasmic). A helical membrane pass occupies residues 43-63 (SAGPGIILGYAIAGFIAFLIM). At 64-86 (RQLGEMVVEEPVAGSFSHFAYKY) the chain is on the cytoplasmic side. The chain crosses the membrane as a helical span at residues 87 to 107 (WGGFAGFASGWNYWVLYVLVA). The Periplasmic portion of the chain corresponds to 108–117 (MAELTAVGKY). Residues 118-138 (IQFWYPEIPTWASAAAFFVII) traverse the membrane as a helical segment. The Cytoplasmic segment spans residues 139–155 (NAINLTNVKVFGEMEFW). Residues 156-176 (FAIIKVIAVIAMILFGAWLLF) form a helical membrane-spanning segment. Residues 177–201 (SDTAGPQATVRNLWEQGGFLPHGWT) lie on the Periplasmic side of the membrane. The chain crosses the membrane as a helical span at residues 202–222 (GLVMMMAIIMFSFGGLELVGI). The Cytoplasmic segment spans residues 223-240 (TAAEADNPEQSIPKATNQ). The helical transmembrane segment at 241-261 (VIYRILIFYIGSLAVLLSLLP) threads the bilayer. Residues 262–271 (WTRVTADTSP) lie on the Periplasmic side of the membrane. Residues 272–292 (FVLIFHELGDTFVANALNIVV) form a helical membrane-spanning segment. The Cytoplasmic portion of the chain corresponds to 293–333 (LTAALSVYNSCVYCNSRMLFGLAQQGNAPKALLNVDKRGVP). Residues 334-354 (VSSILVSAVVTALCVLLNYLA) form a helical membrane-spanning segment. Residues 355 to 358 (PESA) lie on the Periplasmic side of the membrane. Residues 359–379 (FGLLMALVVSALVINWAMISL) traverse the membrane as a helical segment. The Cytoplasmic segment spans residues 380–400 (AHMMFRRAKQQQGVKTRFPAL). A helical transmembrane segment spans residues 401-421 (FYPFGNVLCLLFMAAVLIIML). The Periplasmic portion of the chain corresponds to 422–425 (MTPG). Residues 426–446 (MAISVWLIPVWLLILGVGYLC) form a helical membrane-spanning segment. Topologically, residues 447–457 (KEKTAKTVKAH) are cytoplasmic.

This sequence belongs to the amino acid-polyamine-organocation (APC) superfamily. Amino acid transporter (AAT) (TC 2.A.3.1) family.

The protein resides in the cell inner membrane. The catalysed reaction is L-phenylalanine(in) + H(+)(in) = L-phenylalanine(out) + H(+)(out). The enzyme catalyses L-tryptophan(in) + H(+)(in) = L-tryptophan(out) + H(+)(out). It carries out the reaction L-tyrosine(in) + H(+)(in) = L-tyrosine(out) + H(+)(out). Functionally, permease that is involved in the active transport across the cytoplasmic membrane of all three aromatic amino acids, phenylalanine, tyrosine and tryptophan. The chain is Aromatic amino acid transport protein AroP (aroP) from Salmonella typhi.